A 228-amino-acid chain; its full sequence is Urease accessory protein UreF (228 aa).

The protein belongs to the UreF family. In terms of assembly, ureD, UreF and UreG form a complex that acts as a GTP-hydrolysis-dependent molecular chaperone, activating the urease apoprotein by helping to assemble the nickel containing metallocenter of UreC. The UreE protein probably delivers the nickel.

It localises to the cytoplasm. In terms of biological role, required for maturation of urease via the functional incorporation of the urease nickel metallocenter. The chain is Urease accessory protein UreF from Brucella ovis (strain ATCC 25840 / 63/290 / NCTC 10512).